The chain runs to 959 residues: MSDKTNDDKTLSVNPKKTLTLKRPGVEQSTVRQNFSHGRTKAVVVETKKRKFSRPDEKPEVEAAAAPKPAAPAAAPQQAPASAPVSASAAQASAPQPAPVKAPATKAPAAPSAPVTKPHVAQQRPVHQRPGGQQAQRPRPADRSGMVLNTLSRSEMDARRRALEEAQIREVEERARAVEEAKRRAEEDARRAKEREESARRQAEEEARLKAEAEARRKAEEEAAKRMPQPEARSERRDDARPAPYGARPQQAGRPQGGRPQPAGRPQQGSPRPAPIIADAAPIAGKPLPQSQLRKPGQSDDDDDRRSDAARRGVAAKPEVRAPKVVKGEDDRRRGKLTLTSNLEEEGRSRSLSAMRRRQEKFKRSQMQETREKISREVTIPETITLQELAQRMAERSVDIIKYLMKQGQMMKPGDVIDADTAQLIAEEFGHTVKRVAESDVEEGIFDVADNESAMVSRPPVVTIMGHVDHGKTSLLDAIRHANVVSGEAGGITQHIGAYQVVQNGQKITFIDTPGHAAFTAMRARGAQATDIAILVVAADDSVMPQTIESINHAKAAGVPIIVAINKIDKPAADPQKVRTALLQHEVFVESMGGEVLDVEVSAKNKINLDKLLDAVLLQAEMLDLKADPDRTAEGVVIEAQLDRGRGSVATVLIQKGTLHPGDILVAGSEWGRVRALVNDRGEHVKEAGPAMPVEILGLQGTPQAGDRFAVVANEAKAREIAEYRQRLARDKAVARQSGARGSLEQMMNQLQVSGTKEFPLVIKGDVQGSIEAITNALDKLGTDEVRARIVHSGAGGITESDVSLAEASNAAIIGFNVRANKQARDSAEQQGIEIRYYNIIYDLIDDVKAAMSGLLSPERRETFLGNAEILEVFNITKVGKVAGCRVTEGKVERGAGVRLIRDNVVIHEGKLKTLKRFKDEVAEVPSGQECGMAFENYDDIRAGDVIEAFRVEHVSRTL.

The span at 1–10 (MSDKTNDDKT) shows a compositional bias: basic and acidic residues. The tract at residues 1–374 (MSDKTNDDKT…SQMQETREKI (374 aa)) is disordered. A compositionally biased stretch (polar residues) spans 27 to 37 (EQSTVRQNFSH). 2 stretches are compositionally biased toward low complexity: residues 63–118 (AAAA…VTKP) and 128–138 (QRPGGQQAQRP). Basic and acidic residues-rich tracts occupy residues 154–225 (SEMD…EAAK) and 232–241 (ARSERRDDAR). Over residues 246-284 (GARPQQAGRPQGGRPQPAGRPQQGSPRPAPIIADAAPIA) the composition is skewed to low complexity. Basic and acidic residues predominate over residues 318–333 (PEVRAPKVVKGEDDRR). Positions 457 to 626 (SRPPVVTIMG…LLQAEMLDLK (170 aa)) constitute a tr-type G domain. Positions 466-473 (GHVDHGKT) are G1. 466–473 (GHVDHGKT) provides a ligand contact to GTP. A G2 region spans residues 491–495 (GITQH). A G3 region spans residues 512–515 (DTPG). Residues 512-516 (DTPGH) and 566-569 (NKID) contribute to the GTP site. The segment at 566 to 569 (NKID) is G4. Residues 602–604 (SAK) are G5.

This sequence belongs to the TRAFAC class translation factor GTPase superfamily. Classic translation factor GTPase family. IF-2 subfamily.

It is found in the cytoplasm. In terms of biological role, one of the essential components for the initiation of protein synthesis. Protects formylmethionyl-tRNA from spontaneous hydrolysis and promotes its binding to the 30S ribosomal subunits. Also involved in the hydrolysis of GTP during the formation of the 70S ribosomal complex. The sequence is that of Translation initiation factor IF-2 from Brucella suis biovar 1 (strain 1330).